Here is a 471-residue protein sequence, read N- to C-terminus: Glutamate--tRNA ligase (471 aa).

The 'HIGH' region motif lies at 9–19 (PSPTGYLHVGG). Zn(2+) contacts are provided by Cys-98, Cys-100, Cys-125, and His-127. Positions 237-241 (KLSKR) match the 'KMSKS' region motif. Residue Lys-240 participates in ATP binding.

It belongs to the class-I aminoacyl-tRNA synthetase family. Glutamate--tRNA ligase type 1 subfamily. Monomer. The cofactor is Zn(2+).

The protein resides in the cytoplasm. It carries out the reaction tRNA(Glu) + L-glutamate + ATP = L-glutamyl-tRNA(Glu) + AMP + diphosphate. In terms of biological role, catalyzes the attachment of glutamate to tRNA(Glu) in a two-step reaction: glutamate is first activated by ATP to form Glu-AMP and then transferred to the acceptor end of tRNA(Glu). The chain is Glutamate--tRNA ligase from Escherichia coli O157:H7.